We begin with the raw amino-acid sequence, 158 residues long: NAD(P)H-quinone oxidoreductase subunit N (158 aa).

Belongs to the complex I NdhN subunit family. In terms of assembly, NDH-1 can be composed of about 15 different subunits; different subcomplexes with different compositions have been identified which probably have different functions.

The protein resides in the cellular thylakoid membrane. It catalyses the reaction a plastoquinone + NADH + (n+1) H(+)(in) = a plastoquinol + NAD(+) + n H(+)(out). The enzyme catalyses a plastoquinone + NADPH + (n+1) H(+)(in) = a plastoquinol + NADP(+) + n H(+)(out). Its function is as follows. NDH-1 shuttles electrons from an unknown electron donor, via FMN and iron-sulfur (Fe-S) centers, to quinones in the respiratory and/or the photosynthetic chain. The immediate electron acceptor for the enzyme in this species is believed to be plastoquinone. Couples the redox reaction to proton translocation, and thus conserves the redox energy in a proton gradient. Cyanobacterial NDH-1 also plays a role in inorganic carbon-concentration. The protein is NAD(P)H-quinone oxidoreductase subunit N of Prochlorococcus marinus (strain MIT 9215).